The chain runs to 302 residues: Cyclopropane mycolic acid synthase 2 (302 aa).

Residues 41–42 (YS), 76–84 (LLDIGCGWG), 102–107 (TLSENQ), and 131–132 (WE) contribute to the S-adenosyl-L-methionine site. C284 is a catalytic residue.

This sequence belongs to the CFA/CMAS family. In terms of assembly, homodimer.

Its subcellular location is the cytoplasm. The catalysed reaction is a 1-acyl-2-(9Z)-enoyl-sn-glycero-3-phospholipid + S-adenosyl-L-methionine = a 1-acyl-2-(9-cyclopronane)-acyl-sn-glycero-3-phospholipid + S-adenosyl-L-homocysteine + H(+). It participates in lipid metabolism; mycolic acid biosynthesis. In terms of biological role, catalyzes the formation of trans cyclopropanated ketomycolate or methoxymycolate through the conversion of a double bond to a cyclopropane ring at the proximal position of an oxygenated mycolic acid via the transfer of a methylene group from S-adenosyl-L-methionine. In the absence of MmaA2, CmaA2 has a non-specific cis-cyclopropanating activity and is able to catalyze the conversion of a double bond to a cis cyclopropane ring at the distal position of an alpha mycolic acid. Cyclopropanated mycolic acids are key factors participating in cell envelope permeability, host immunomodulation and persistence. This is Cyclopropane mycolic acid synthase 2 (cmaA2) from Mycobacterium bovis (strain ATCC BAA-935 / AF2122/97).